We begin with the raw amino-acid sequence, 89 residues long: Acylphosphatase (89 aa).

The Acylphosphatase-like domain maps to 3–89 (QKHLQVFGTV…SEDFSDFKSI (87 aa)). Active-site residues include R18 and N36.

This sequence belongs to the acylphosphatase family.

It catalyses the reaction an acyl phosphate + H2O = a carboxylate + phosphate + H(+). This is Acylphosphatase (acyP) from Staphylococcus haemolyticus (strain JCSC1435).